A 158-amino-acid polypeptide reads, in one-letter code: 3-dehydroquinate dehydratase (158 aa).

Residue tyrosine 22 is the Proton acceptor of the active site. Substrate contacts are provided by asparagine 74, histidine 80, and aspartate 87. Histidine 100 functions as the Proton donor in the catalytic mechanism. Residues 101 to 102 (IS) and arginine 111 each bind substrate.

Belongs to the type-II 3-dehydroquinase family. As to quaternary structure, homododecamer.

It carries out the reaction 3-dehydroquinate = 3-dehydroshikimate + H2O. It participates in metabolic intermediate biosynthesis; chorismate biosynthesis; chorismate from D-erythrose 4-phosphate and phosphoenolpyruvate: step 3/7. In terms of biological role, catalyzes a trans-dehydration via an enolate intermediate. This chain is 3-dehydroquinate dehydratase, found in Helicobacter hepaticus (strain ATCC 51449 / 3B1).